Consider the following 142-residue polypeptide: Universal stress protein G (142 aa).

This sequence belongs to the universal stress protein A family.

This is Universal stress protein G (uspG) from Salmonella typhi.